Reading from the N-terminus, the 589-residue chain is Probable translation initiation factor IF-2 (589 aa).

The tr-type G domain maps to 4–225 (VRSPFVVVMG…AGVSQRFIPR (222 aa)). The segment at 13-20 (GHVDVGKT) is G1. 13-20 (GHVDVGKT) provides a ligand contact to GTP. Positions 38–42 (MITQH) are G2. Residues 79-82 (DTPG) are G3. Residues 79–83 (DTPGH) and 133–136 (NKLD) each bind GTP. Residues 133-136 (NKLD) are G4. Residues 201–203 (SAV) are G5.

It belongs to the TRAFAC class translation factor GTPase superfamily. Classic translation factor GTPase family. IF-2 subfamily.

Functionally, function in general translation initiation by promoting the binding of the formylmethionine-tRNA to ribosomes. Seems to function along with eIF-2. The polypeptide is Probable translation initiation factor IF-2 (Pyrobaculum aerophilum (strain ATCC 51768 / DSM 7523 / JCM 9630 / CIP 104966 / NBRC 100827 / IM2)).